Consider the following 499-residue polypeptide: Glycolate oxidase subunit GlcD (499 aa).

The 179-residue stretch at 52 to 230 folds into the FAD-binding PCMH-type domain; sequence YRTRPLLVVL…TEVTVKLLPK (179 aa).

This sequence belongs to the FAD-binding oxidoreductase/transferase type 4 family. The glycolate oxidase likely consists of three subunits, GlcD, GlcE and GlcF. FAD serves as cofactor.

The protein resides in the cell inner membrane. It carries out the reaction glycolate + A = glyoxylate + AH2. It catalyses the reaction (R)-lactate + A = pyruvate + AH2. Functionally, component of a complex that catalyzes the oxidation of glycolate to glyoxylate. Is required for E.coli to grow on glycolate as a sole source of carbon. Is also able to oxidize D-lactate ((R)-lactate) with a similar rate. Does not link directly to O(2), and 2,6-dichloroindophenol (DCIP) and phenazine methosulfate (PMS) can act as artificial electron acceptors in vitro, but the physiological molecule that functions as a primary electron acceptor during glycolate oxidation is unknown. This is Glycolate oxidase subunit GlcD (glcD) from Escherichia coli O6:H1 (strain CFT073 / ATCC 700928 / UPEC).